Here is a 123-residue protein sequence, read N- to C-terminus: Chaperone protein SycN (123 aa).

Interacts with YscB to form a complex which specifically binds to YopN.

It is found in the cytoplasm. The protein resides in the cell inner membrane. Its function is as follows. Functions as a specific chaperone for YopN. It could facilitate the secretion and the subsequent translocation of YopN. This chain is Chaperone protein SycN (sycN), found in Yersinia enterocolitica.